The following is a 218-amino-acid chain: GTP cyclohydrolase 1 (218 aa).

Zn(2+)-binding residues include Cys109, His112, and Cys180.

This sequence belongs to the GTP cyclohydrolase I family. Toroid-shaped homodecamer, composed of two pentamers of five dimers.

It carries out the reaction GTP + H2O = 7,8-dihydroneopterin 3'-triphosphate + formate + H(+). Its pathway is cofactor biosynthesis; 7,8-dihydroneopterin triphosphate biosynthesis; 7,8-dihydroneopterin triphosphate from GTP: step 1/1. The polypeptide is GTP cyclohydrolase 1 (folE) (Haemophilus influenzae (strain ATCC 51907 / DSM 11121 / KW20 / Rd)).